Here is a 749-residue protein sequence, read N- to C-terminus: DNA topoisomerase 1 (749 aa).

The interval 1 to 110 is disordered; it reads MSDSEDVALS…PKKEDSVETD (110 aa). Residues 62–75 are compositionally biased toward basic and acidic residues; the sequence is LSKEKVNNKVKDEL. The span at 79-94 shows a compositional bias: low complexity; the sequence is PVTPKKTPKISKTPVS. Residues 101 to 110 are compositionally biased toward basic and acidic residues; the sequence is PKKEDSVETD. 3 interaction with DNA regions span residues 338–339, 401–406, and 493–495; these read KY, RAGGEK, and TAK. The 405-residue stretch at 345–749 folds into the Topo IB-type catalytic domain; sequence NSSIKGISDM…IESTDENWRF (405 aa). Catalysis depends on tyrosine 707, which acts as the O-(3'-phospho-DNA)-tyrosine intermediate.

It belongs to the type IB topoisomerase family.

The protein localises to the nucleus. It localises to the nucleolus. The protein resides in the nucleoplasm. The enzyme catalyses ATP-independent breakage of single-stranded DNA, followed by passage and rejoining.. Functionally, releases the supercoiling and torsional tension of DNA introduced during the DNA replication and transcription by transiently cleaving and rejoining one strand of the DNA duplex. Introduces a single-strand break via transesterification at the specific target site 5'-[CT]CCTTp site in duplex DNA. The scissile phosphodiester is attacked by the catalytic tyrosine of the enzyme, resulting in the formation of a DNA-(3'-phosphotyrosyl)-enzyme intermediate and the expulsion of a 5'-OH DNA strand. The free DNA strand then undergoes passage around the unbroken strand thus removing DNA supercoils. Finally, in the religation step, the DNA 5'-OH attacks the covalent intermediate to expel the active-site tyrosine and restore the DNA phosphodiester backbone. The sequence is that of DNA topoisomerase 1 (TOP1) from Candidozyma auris (Yeast).